The chain runs to 405 residues: Glucose-1-phosphate adenylyltransferase (405 aa).

Alpha-D-glucose 1-phosphate is bound by residues Tyr-96, Gly-161, 176 to 177, and Ser-194; that span reads EK.

It belongs to the bacterial/plant glucose-1-phosphate adenylyltransferase family. In terms of assembly, homotetramer.

It catalyses the reaction alpha-D-glucose 1-phosphate + ATP + H(+) = ADP-alpha-D-glucose + diphosphate. It participates in glycan biosynthesis; glycogen biosynthesis. Involved in the biosynthesis of ADP-glucose, a building block required for the elongation reactions to produce glycogen. Catalyzes the reaction between ATP and alpha-D-glucose 1-phosphate (G1P) to produce pyrophosphate and ADP-Glc. This Aliivibrio fischeri (strain ATCC 700601 / ES114) (Vibrio fischeri) protein is Glucose-1-phosphate adenylyltransferase.